Reading from the N-terminus, the 490-residue chain is Cytochrome P450 71B29 (490 aa).

The helical transmembrane segment at 1-21 threads the bilayer; the sequence is MAIILCFLILLPLILIFLKKL. Residue cysteine 440 participates in heme binding.

Belongs to the cytochrome P450 family. It depends on heme as a cofactor.

It is found in the membrane. The sequence is that of Cytochrome P450 71B29 (CYP71B29) from Arabidopsis thaliana (Mouse-ear cress).